Consider the following 422-residue polypeptide: MDRETFHSCSSLVKLPRQIHQQHCSSHFIEYIEREIPYSKFFKNYLIPNQPCMFSKKFTEEWNCRKKWVTAEGKPNLQRLLHEFDETPVPVANCSVKEYNANPKQIMPFKEFIQYWRESIQNGHSSPKGCLYLKDWHMQRNFPEHNIYKTPIYFSSDWLNEYWDTIEVDDYRFVYMGPKGSWTPFHADVFRSYSWSANICGRKKWLLYPPGQEDFLRDCHGNLAYDVTAPILQDKGLYAQFEEACQPLEIIQEAGEIIFVPSGWHHQVYNLEDTISINHNWLNGCNLDIMWQFLQDELSSVQREIEEWRDTMDTWHQHCQVIMKSCTGIDYAEFASFLKTIANNRISFLNSSPRNADSCQDLLAESLCALGPHHAAFDLQRVLHIFEIMLNNEDFKRLDPATLSFKPEDLLQEIREAIRTIV.

In terms of domain architecture, JmjC spans 139–298; sequence QRNFPEHNIY…IMWQFLQDEL (160 aa). 3 residues coordinate Fe cation: His186, Asp188, and His266.

The protein belongs to the JMJD6 family. The cofactor is Fe(2+).

It localises to the cytoplasm. The catalysed reaction is L-lysyl-[protein] + 2-oxoglutarate + O2 = 4-hydroxy-L-lysyl-[protein] + succinate + CO2. In terms of biological role, catalyzes the 2-oxoglutarate and iron-dependent C4-lysyl hydroxylation of ETF1 at 'Lys-63' thereby promoting the translational termination efficiency of ETF1. The protein is 2-oxoglutarate and iron-dependent oxygenase JMJD4 (jmjd4) of Danio rerio (Zebrafish).